The primary structure comprises 570 residues: Formate--tetrahydrofolate ligase (570 aa).

Position 65–72 (65–72 (TPFGEGKT)) interacts with ATP.

This sequence belongs to the formate--tetrahydrofolate ligase family.

The catalysed reaction is (6S)-5,6,7,8-tetrahydrofolate + formate + ATP = (6R)-10-formyltetrahydrofolate + ADP + phosphate. The protein operates within one-carbon metabolism; tetrahydrofolate interconversion. In Shewanella sediminis (strain HAW-EB3), this protein is Formate--tetrahydrofolate ligase.